Reading from the N-terminus, the 211-residue chain is Endonuclease III (211 aa).

The HhH domain occupies R108–N127. C187, C194, C197, and C203 together coordinate [4Fe-4S] cluster.

The protein belongs to the Nth/MutY family. It depends on [4Fe-4S] cluster as a cofactor.

The catalysed reaction is 2'-deoxyribonucleotide-(2'-deoxyribose 5'-phosphate)-2'-deoxyribonucleotide-DNA = a 3'-end 2'-deoxyribonucleotide-(2,3-dehydro-2,3-deoxyribose 5'-phosphate)-DNA + a 5'-end 5'-phospho-2'-deoxyribonucleoside-DNA + H(+). In terms of biological role, DNA repair enzyme that has both DNA N-glycosylase activity and AP-lyase activity. The DNA N-glycosylase activity releases various damaged pyrimidines from DNA by cleaving the N-glycosidic bond, leaving an AP (apurinic/apyrimidinic) site. The AP-lyase activity cleaves the phosphodiester bond 3' to the AP site by a beta-elimination, leaving a 3'-terminal unsaturated sugar and a product with a terminal 5'-phosphate. This is Endonuclease III from Escherichia coli O6:H1 (strain CFT073 / ATCC 700928 / UPEC).